The following is a 1075-amino-acid chain: DNA-directed RNA polymerase subunit beta (1075 aa).

Belongs to the RNA polymerase beta chain family. In plastids the minimal PEP RNA polymerase catalytic core is composed of four subunits: alpha, beta, beta', and beta''. When a (nuclear-encoded) sigma factor is associated with the core the holoenzyme is formed, which can initiate transcription.

The protein resides in the plastid. It is found in the chloroplast. It carries out the reaction RNA(n) + a ribonucleoside 5'-triphosphate = RNA(n+1) + diphosphate. Its function is as follows. DNA-dependent RNA polymerase catalyzes the transcription of DNA into RNA using the four ribonucleoside triphosphates as substrates. The sequence is that of DNA-directed RNA polymerase subunit beta from Sorghum bicolor (Sorghum).